Consider the following 301-residue polypeptide: Ribosomal RNA small subunit methyltransferase A (301 aa).

Residues Asn-23, Ile-25, Gly-50, Glu-72, Asp-97, and Asn-149 each contribute to the S-adenosyl-L-methionine site.

The protein belongs to the class I-like SAM-binding methyltransferase superfamily. rRNA adenine N(6)-methyltransferase family. RsmA subfamily.

The protein localises to the cytoplasm. It catalyses the reaction adenosine(1518)/adenosine(1519) in 16S rRNA + 4 S-adenosyl-L-methionine = N(6)-dimethyladenosine(1518)/N(6)-dimethyladenosine(1519) in 16S rRNA + 4 S-adenosyl-L-homocysteine + 4 H(+). Functionally, specifically dimethylates two adjacent adenosines (A1518 and A1519) in the loop of a conserved hairpin near the 3'-end of 16S rRNA in the 30S particle. May play a critical role in biogenesis of 30S subunits. In Rickettsia peacockii (strain Rustic), this protein is Ribosomal RNA small subunit methyltransferase A.